The following is a 390-amino-acid chain: Transforming growth factor beta-1 proprotein (390 aa).

Residues 1–29 (MPPSGLRLLPLLLPLLWLLVLTPGRPAAG) form the signal peptide. The interval 30-74 (LSTCKTIDMELVKRKRIEAIRGQILSKLRLASPPSQGDVPPGPLP) is straightjacket domain. An arm domain region spans residues 75–271 (EAVLALYNST…ATPLERAQHL (197 aa)). N-linked (GlcNAc...) asparagine glycans are attached at residues asparagine 82, asparagine 136, and asparagine 176. Residues 226 to 252 (DSKDNTLHVEINGFNSGRRGDLATIHG) are bowtie tail. Positions 244–246 (RGD) match the Cell attachment site motif. 4 disulfides stabilise this stretch: cysteine 285–cysteine 294, cysteine 293–cysteine 356, cysteine 322–cysteine 387, and cysteine 326–cysteine 389.

It belongs to the TGF-beta family. In terms of assembly, homodimer; disulfide-linked. Interacts with the serine proteases, HTRA1 and HTRA3: the interaction with either inhibits TGFB1-mediated signaling and the HTRA protease activity is required for this inhibition. May interact with THSD4; this interaction may lead to sequestration by FBN1 microfibril assembly and attenuation of TGFB signaling. Interacts with CD109, DPT and ASPN. Interacts with EFEMP2. Interacts with TSKU; the interaction contributes to regulation of the hair cycle. Interacts with TGFBR3. Homodimer; disulfide-linked. Interacts with transforming growth factor beta-1 (TGF-beta-1) chain; interaction is non-covalent and maintains TGF-beta-1 in a latent state; each latency-associated peptide (LAP) monomer interacts with TGF-beta-1 in the other monomer. Interacts with LTBP1; leading to regulation of TGF-beta-1 activation. Interacts with LRRC32/GARP; leading to regulation of TGF-beta-1 activation on the surface of activated regulatory T-cells (Tregs). Interacts with LRRC33/NRROS; leading to regulation of TGF-beta-1 activation in macrophages and microglia. Interacts (via cell attachment site) with integrins ITGAV and ITGB6 (ITGAV:ITGB6), leading to release of the active TGF-beta-1. Interacts with NREP; the interaction results in a decrease in TGFB1 autoinduction. Interacts with HSP90AB1; inhibits latent TGFB1 activation. As to quaternary structure, homodimer; disulfide-linked. Interacts with TGF-beta receptors (TGFBR1 and TGFBR2), leading to signal transduction. Post-translationally, transforming growth factor beta-1 proprotein: The precursor proprotein is cleaved in the Golgi apparatus by FURIN to form Transforming growth factor beta-1 (TGF-beta-1) and Latency-associated peptide (LAP) chains, which remain non-covalently linked, rendering TGF-beta-1 inactive. In terms of processing, N-glycosylated. Deglycosylation leads to activation of Transforming growth factor beta-1 (TGF-beta-1); mechanisms triggering deglycosylation-driven activation of TGF-beta-1 are however unclear.

The protein localises to the secreted. It localises to the extracellular space. The protein resides in the extracellular matrix. Transforming growth factor beta-1 proprotein: Precursor of the Latency-associated peptide (LAP) and Transforming growth factor beta-1 (TGF-beta-1) chains, which constitute the regulatory and active subunit of TGF-beta-1, respectively. Functionally, required to maintain the Transforming growth factor beta-1 (TGF-beta-1) chain in a latent state during storage in extracellular matrix. Associates non-covalently with TGF-beta-1 and regulates its activation via interaction with 'milieu molecules', such as LTBP1, LRRC32/GARP and LRRC33/NRROS, that control activation of TGF-beta-1. Interaction with LRRC33/NRROS regulates activation of TGF-beta-1 in macrophages and microglia. Interaction with LRRC32/GARP controls activation of TGF-beta-1 on the surface of activated regulatory T-cells (Tregs). Interaction with integrins (ITGAV:ITGB6 or ITGAV:ITGB8) results in distortion of the Latency-associated peptide chain and subsequent release of the active TGF-beta-1. In terms of biological role, multifunctional protein that regulates the growth and differentiation of various cell types and is involved in various processes, such as normal development, immune function, microglia function and responses to neurodegeneration. Activation into mature form follows different steps: following cleavage of the proprotein in the Golgi apparatus, Latency-associated peptide (LAP) and Transforming growth factor beta-1 (TGF-beta-1) chains remain non-covalently linked rendering TGF-beta-1 inactive during storage in extracellular matrix. At the same time, LAP chain interacts with 'milieu molecules', such as LTBP1, LRRC32/GARP and LRRC33/NRROS that control activation of TGF-beta-1 and maintain it in a latent state during storage in extracellular milieus. TGF-beta-1 is released from LAP by integrins (ITGAV:ITGB6 or ITGAV:ITGB8): integrin-binding to LAP stabilizes an alternative conformation of the LAP bowtie tail and results in distortion of the LAP chain and subsequent release of the active TGF-beta-1. Once activated following release of LAP, TGF-beta-1 acts by binding to TGF-beta receptors (TGFBR1 and TGFBR2), which transduce signal. While expressed by many cells types, TGF-beta-1 only has a very localized range of action within cell environment thanks to fine regulation of its activation by Latency-associated peptide chain (LAP) and 'milieu molecules'. Plays an important role in bone remodeling: acts as a potent stimulator of osteoblastic bone formation, causing chemotaxis, proliferation and differentiation in committed osteoblasts. Can promote either T-helper 17 cells (Th17) or regulatory T-cells (Treg) lineage differentiation in a concentration-dependent manner. At high concentrations, leads to FOXP3-mediated suppression of RORC and down-regulation of IL-17 expression, favoring Treg cell development. At low concentrations in concert with IL-6 and IL-21, leads to expression of the IL-17 and IL-23 receptors, favoring differentiation to Th17 cells. Stimulates sustained production of collagen through the activation of CREB3L1 by regulated intramembrane proteolysis (RIP). Mediates SMAD2/3 activation by inducing its phosphorylation and subsequent translocation to the nucleus. Positively regulates odontoblastic differentiation in dental papilla cells, via promotion of IPO7-mediated translocation of phosphorylated SMAD2 to the nucleus and subsequent transcription of target genes. Can induce epithelial-to-mesenchymal transition (EMT) and cell migration in various cell types. This Sus scrofa (Pig) protein is Transforming growth factor beta-1 proprotein (TGFB1).